The following is a 493-amino-acid chain: MSKKYVIALDQGTTSSRAIVFDHDANMVASSQREFGQIYPQPGWVEHDAMEIWASQSSTLIEALARADIHSEDVAAIGITNQRETTVIWDKMTGKPVYNAIVWQCRRSKAICDELKAQGLEEYVKDCTGLLLDPYFSGTKIKWILDNVEGVRERAEKGELLFGTIDTWLVWKLTEGKVHVTDPTNASRTLLFNIHQQAWDEKLLNALGIPRSLLPEVKPSSAIYGQTRIAGEGSSIAIAGIAGDQQSALFGQLCIDEGMAKNTYGTGCFLLMNTGTEAVKSQQGLLTTIAVGAKGEVNYALEGSVFMGGATIQWLRDELGLIRDAQDTEYFASKVENTNGVYLVPAFVGLGAPYWDPDARGALVGLTRGANRNHIIRAALEAIAYQSRDLLDAMSKDSGVELKQIKVDGGAVANDFLMQFQADITNVDVLRPELTETTAMGAAFLAGLAVGFWSSTAELKHKAGIERRFKPKINDAQRATLYDGWKEAVARTR.

Threonine 13 lines the ADP pocket. 3 residues coordinate ATP: threonine 13, threonine 14, and serine 15. A sn-glycerol 3-phosphate-binding site is contributed by threonine 13. Residue arginine 17 participates in ADP binding. Residues arginine 83, glutamate 84, tyrosine 135, and aspartate 244 each contribute to the sn-glycerol 3-phosphate site. Residues arginine 83, glutamate 84, tyrosine 135, aspartate 244, and glutamine 245 each coordinate glycerol. Positions 266 and 309 each coordinate ADP. The ATP site is built by threonine 266, glycine 309, glutamine 313, and glycine 410. ADP contacts are provided by glycine 410 and asparagine 414.

The protein belongs to the FGGY kinase family.

The enzyme catalyses glycerol + ATP = sn-glycerol 3-phosphate + ADP + H(+). It participates in polyol metabolism; glycerol degradation via glycerol kinase pathway; sn-glycerol 3-phosphate from glycerol: step 1/1. With respect to regulation, inhibited by fructose 1,6-bisphosphate (FBP). Key enzyme in the regulation of glycerol uptake and metabolism. Catalyzes the phosphorylation of glycerol to yield sn-glycerol 3-phosphate. The protein is Glycerol kinase of Shewanella piezotolerans (strain WP3 / JCM 13877).